Reading from the N-terminus, the 384-residue chain is 8-amino-7-oxononanoate synthase (384 aa).

Substrate is bound at residue arginine 21. Position 108–109 (108–109) interacts with pyridoxal 5'-phosphate; sequence GF. Histidine 133 is a binding site for substrate. Pyridoxal 5'-phosphate contacts are provided by serine 179, histidine 207, and threonine 233. At lysine 236 the chain carries N6-(pyridoxal phosphate)lysine. Threonine 352 contributes to the substrate binding site.

It belongs to the class-II pyridoxal-phosphate-dependent aminotransferase family. BioF subfamily. As to quaternary structure, homodimer. Pyridoxal 5'-phosphate serves as cofactor.

It carries out the reaction 6-carboxyhexanoyl-[ACP] + L-alanine + H(+) = (8S)-8-amino-7-oxononanoate + holo-[ACP] + CO2. It functions in the pathway cofactor biosynthesis; biotin biosynthesis. In terms of biological role, catalyzes the decarboxylative condensation of pimeloyl-[acyl-carrier protein] and L-alanine to produce 8-amino-7-oxononanoate (AON), [acyl-carrier protein], and carbon dioxide. This Escherichia coli (strain UTI89 / UPEC) protein is 8-amino-7-oxononanoate synthase.